A 352-amino-acid chain; its full sequence is Selenide, water dikinase (352 aa).

Residue Cys23 is part of the active site. Residues Lys26 and 54–56 (SRD) each bind ATP. Asp57 serves as a coordination point for Mg(2+). Residues Asp74, Asp97, and 145–147 (GHS) contribute to the ATP site. Residue Asp97 participates in Mg(2+) binding. Mg(2+) is bound at residue Asp233.

The protein belongs to the selenophosphate synthase 1 family. Class I subfamily. Homodimer. It depends on Mg(2+) as a cofactor.

It carries out the reaction hydrogenselenide + ATP + H2O = selenophosphate + AMP + phosphate + 2 H(+). In terms of biological role, synthesizes selenophosphate from selenide and ATP. The chain is Selenide, water dikinase from Shewanella baltica (strain OS185).